We begin with the raw amino-acid sequence, 494 residues long: Probable malate:quinone oxidoreductase (494 aa).

It belongs to the MQO family. The cofactor is FAD.

The enzyme catalyses (S)-malate + a quinone = a quinol + oxaloacetate. The protein operates within carbohydrate metabolism; tricarboxylic acid cycle; oxaloacetate from (S)-malate (quinone route): step 1/1. This Micrococcus luteus (strain ATCC 4698 / DSM 20030 / JCM 1464 / CCM 169 / CCUG 5858 / IAM 1056 / NBRC 3333 / NCIMB 9278 / NCTC 2665 / VKM Ac-2230) (Micrococcus lysodeikticus) protein is Probable malate:quinone oxidoreductase.